The following is a 349-amino-acid chain: Outer membrane protein assembly factor BamC (349 aa).

Positions methionine 1–alanine 24 are cleaved as a signal peptide. Cysteine 25 carries the N-palmitoyl cysteine lipid modification. Cysteine 25 is lipidated: S-diacylglycerol cysteine.

This sequence belongs to the BamC family. As to quaternary structure, part of the Bam complex, which is composed of the outer membrane protein BamA, and four lipoproteins BamB, BamC, BamD and BamE.

The protein resides in the cell outer membrane. In terms of biological role, part of the outer membrane protein assembly complex, which is involved in assembly and insertion of beta-barrel proteins into the outer membrane. This is Outer membrane protein assembly factor BamC from Photorhabdus asymbiotica subsp. asymbiotica (strain ATCC 43949 / 3105-77) (Xenorhabdus luminescens (strain 2)).